Consider the following 466-residue polypeptide: MSSIRLYNTLTRKKELFEPLEPNKVKMYVCGPTVYNYIHIGNARAAIVFDTIRRYLEFRGYEVKYVSNFTDVDDKLIKAARELGEDVPTIAERFIQAYFEDITALGCKKADVHPRVTENIDTIIEFIQTLIDRGYAYEVDGDVYYRTRKFKEYGKLSHQSIDELKAGARIEVGEKKEDPLDFALWKAAKEGEICWDSPWGKGRPGWHIECSAMARKYLGDTIDIHAGGQDLTFPHHENEIAQSEALTGKPFAKYWLHNGYLNINNEKMSKSLGNFVLVHDIIQQIDPQVLRFFMLSVHYRHPINYSEELLESAKKGLERLKTSYFNLKHRLQSSTNLTDDDDQWLARIQEQHEAFIREMDDDFNTANGIAVLFELSKQANLYLLEKNTSERVIHAFLREFEQLLDVLGITLQEEELLDEEIEALIQKRNEARKNRNFALADQIRDELKAKNIILEDTPQGTRWKRG.

Residue cysteine 30 coordinates Zn(2+). A 'HIGH' region motif is present at residues 32–42; that stretch reads PTVYNYIHIGN. Residues cysteine 210, histidine 235, and glutamate 239 each contribute to the Zn(2+) site. The 'KMSKS' region signature appears at 267-271; that stretch reads KMSKS. Lysine 270 contributes to the ATP binding site. Phosphoserine is present on serine 271.

It belongs to the class-I aminoacyl-tRNA synthetase family. As to quaternary structure, monomer. Requires Zn(2+) as cofactor.

The protein resides in the cytoplasm. The catalysed reaction is tRNA(Cys) + L-cysteine + ATP = L-cysteinyl-tRNA(Cys) + AMP + diphosphate. The polypeptide is Cysteine--tRNA ligase (Geobacillus sp. (strain WCH70)).